Here is a 368-residue protein sequence, read N- to C-terminus: tRNA-specific 2-thiouridylase MnmA (368 aa).

ATP contacts are provided by residues 11 to 18 (GMSGGVDS) and Met-37. The tract at residues 97 to 99 (NPD) is interaction with target base in tRNA. The active-site Nucleophile is the Cys-102. Cys-102 and Cys-199 form a disulfide bridge. Gly-127 serves as a coordination point for ATP. The interval 149 to 151 (KDQ) is interaction with tRNA. Cys-199 functions as the Cysteine persulfide intermediate in the catalytic mechanism. The tract at residues 311–312 (RY) is interaction with tRNA.

This sequence belongs to the MnmA/TRMU family. Interacts with TusE.

The protein resides in the cytoplasm. It carries out the reaction S-sulfanyl-L-cysteinyl-[protein] + uridine(34) in tRNA + AH2 + ATP = 2-thiouridine(34) in tRNA + L-cysteinyl-[protein] + A + AMP + diphosphate + H(+). In terms of biological role, catalyzes the 2-thiolation of uridine at the wobble position (U34) of tRNA(Lys), tRNA(Glu) and tRNA(Gln), leading to the formation of s(2)U34, the first step of tRNA-mnm(5)s(2)U34 synthesis. Sulfur is provided by IscS, via a sulfur-relay system. Binds ATP and its substrate tRNAs. In Klebsiella pneumoniae (strain 342), this protein is tRNA-specific 2-thiouridylase MnmA.